Here is a 30-residue protein sequence, read N- to C-terminus: Snake venom serine protease (30 aa).

Residues 1 to 30 (VIGGDECNINEHRFLVALYDPDGFLSGGIL) form the Peptidase S1 domain.

The protein belongs to the peptidase S1 family. Snake venom subfamily. In terms of assembly, monomer. Post-translationally, N-Glycosylated. As to expression, expressed by the venom gland.

The protein localises to the secreted. Inhibited by diisopropylfluorophosphate (DFP). In terms of biological role, snake venom serine protease that catalyzes the hydrolysis of arginine esters, kallikrein substrates Pro-Phe-Arg-MCA and Z-Phe-Arg-MCA. Cleaves kininogen analogs to release bradykinin. Induces contraction of the isolated rat uterus directly at high concentrations, but provokes more forceful contractions when injected in presence of bovine plasma. Shows capillary permeability-increasing activity and hypotensive activity on the anesthetized rat. The chain is Snake venom serine protease from Crotalus viridis viridis (Prairie rattlesnake).